The following is a 433-amino-acid chain: Inositol hexakisphosphate kinase 1 (433 aa).

The disordered stretch occupies residues Glu100–Ser160. Positions Pro113–His123 are enriched in basic residues. A compositionally biased stretch (polar residues) spans Ser139–Ala149. Residues Lys150–Ser160 are compositionally biased toward basic and acidic residues. Ser151 carries the post-translational modification Phosphoserine. Substrate is bound at residue Pro220–Gly228. The interval Glu359–Pro383 is disordered.

This sequence belongs to the inositol phosphokinase (IPK) family. As to expression, highly expressed in brain and testis. Detected at much lower levels in heart, kidney, liver, lung and spleen.

Its subcellular location is the cytoplasm. The protein localises to the nucleus. The enzyme catalyses 1D-myo-inositol hexakisphosphate + ATP = 5-diphospho-1D-myo-inositol 1,2,3,4,6-pentakisphosphate + ADP. It catalyses the reaction 1-diphospho-1D-myo-inositol 2,3,4,5,6-pentakisphosphate + ATP + H(+) = 1,5-bis(diphospho)-1D-myo-inositol 2,3,4,6-tetrakisphosphate + ADP. Its function is as follows. Converts inositol hexakisphosphate (InsP6) to diphosphoinositol pentakisphosphate (InsP7/PP-InsP5). Converts 1,3,4,5,6-pentakisphosphate (InsP5) to PP-InsP4. This Mus musculus (Mouse) protein is Inositol hexakisphosphate kinase 1 (Ip6k1).